A 359-amino-acid polypeptide reads, in one-letter code: Phosphate acyltransferase (359 aa).

A disordered region spans residues 338–359; the sequence is AGGVQSAPETEAPGAHPSPHVA.

Belongs to the PlsX family. As to quaternary structure, homodimer. Probably interacts with PlsY.

The protein localises to the cytoplasm. The enzyme catalyses a fatty acyl-[ACP] + phosphate = an acyl phosphate + holo-[ACP]. Its pathway is lipid metabolism; phospholipid metabolism. Catalyzes the reversible formation of acyl-phosphate (acyl-PO(4)) from acyl-[acyl-carrier-protein] (acyl-ACP). This enzyme utilizes acyl-ACP as fatty acyl donor, but not acyl-CoA. The chain is Phosphate acyltransferase from Cupriavidus taiwanensis (strain DSM 17343 / BCRC 17206 / CCUG 44338 / CIP 107171 / LMG 19424 / R1) (Ralstonia taiwanensis (strain LMG 19424)).